Here is a 345-residue protein sequence, read N- to C-terminus: Biotin synthase (345 aa).

Positions 49-276 constitute a Radical SAM core domain; the sequence is NQVQMSTLLS…ASFVRLSAGR (228 aa). The [4Fe-4S] cluster site is built by cysteine 64, cysteine 68, and cysteine 71. 4 residues coordinate [2Fe-2S] cluster: cysteine 108, cysteine 139, cysteine 199, and arginine 271.

The protein belongs to the radical SAM superfamily. Biotin synthase family. Homodimer. [4Fe-4S] cluster serves as cofactor. It depends on [2Fe-2S] cluster as a cofactor.

It carries out the reaction (4R,5S)-dethiobiotin + (sulfur carrier)-SH + 2 reduced [2Fe-2S]-[ferredoxin] + 2 S-adenosyl-L-methionine = (sulfur carrier)-H + biotin + 2 5'-deoxyadenosine + 2 L-methionine + 2 oxidized [2Fe-2S]-[ferredoxin]. It functions in the pathway cofactor biosynthesis; biotin biosynthesis; biotin from 7,8-diaminononanoate: step 2/2. Catalyzes the conversion of dethiobiotin (DTB) to biotin by the insertion of a sulfur atom into dethiobiotin via a radical-based mechanism. This chain is Biotin synthase, found in Nitrosococcus oceani (strain ATCC 19707 / BCRC 17464 / JCM 30415 / NCIMB 11848 / C-107).